The following is a 358-amino-acid chain: tRNA N6-adenosine threonylcarbamoyltransferase (358 aa).

Fe cation contacts are provided by histidine 122 and histidine 126. Residues 145 to 149, aspartate 178, glycine 191, and asparagine 287 contribute to the substrate site; that span reads LVSGG. Residue aspartate 315 coordinates Fe cation.

This sequence belongs to the KAE1 / TsaD family. Fe(2+) is required as a cofactor.

The protein resides in the cytoplasm. It carries out the reaction L-threonylcarbamoyladenylate + adenosine(37) in tRNA = N(6)-L-threonylcarbamoyladenosine(37) in tRNA + AMP + H(+). In terms of biological role, required for the formation of a threonylcarbamoyl group on adenosine at position 37 (t(6)A37) in tRNAs that read codons beginning with adenine. Is involved in the transfer of the threonylcarbamoyl moiety of threonylcarbamoyl-AMP (TC-AMP) to the N6 group of A37, together with TsaE and TsaB. TsaD likely plays a direct catalytic role in this reaction. In Hydrogenovibrio crunogenus (strain DSM 25203 / XCL-2) (Thiomicrospira crunogena), this protein is tRNA N6-adenosine threonylcarbamoyltransferase.